The sequence spans 288 residues: ATP synthase gamma chain (288 aa).

The protein belongs to the ATPase gamma chain family. In terms of assembly, F-type ATPases have 2 components, CF(1) - the catalytic core - and CF(0) - the membrane proton channel. CF(1) has five subunits: alpha(3), beta(3), gamma(1), delta(1), epsilon(1). CF(0) has three main subunits: a, b and c.

The protein localises to the cell membrane. Its function is as follows. Produces ATP from ADP in the presence of a proton gradient across the membrane. The gamma chain is believed to be important in regulating ATPase activity and the flow of protons through the CF(0) complex. The chain is ATP synthase gamma chain from Macrococcus caseolyticus (strain JCSC5402) (Macrococcoides caseolyticum).